We begin with the raw amino-acid sequence, 169 residues long: Ecotin (169 aa).

An N-terminal signal peptide occupies residues 1-21 (MKKCSIILASVLLATSINAIA). A disulfide bridge connects residues Cys76 and Cys113.

The protein belongs to the protease inhibitor I11 (ecotin) family. Homodimer.

The protein resides in the periplasm. General inhibitor of pancreatic serine proteases: inhibits chymotrypsin, trypsin, elastases, factor X, kallikrein as well as a variety of other proteases. The chain is Ecotin from Yersinia pseudotuberculosis serotype O:1b (strain IP 31758).